Consider the following 444-residue polypeptide: Ribosomal protein uS12 methylthiotransferase RimO (444 aa).

An MTTase N-terminal domain is found at 6–116 (PNIGFVSLGC…VMEHVHKYVP (111 aa)). The [4Fe-4S] cluster site is built by Cys-15, Cys-51, Cys-80, Cys-148, Cys-152, and Cys-155. Positions 134-375 (LTPKHYAYLK…MQLQQEISAA (242 aa)) constitute a Radical SAM core domain. Positions 378–444 (QQKIGKTWKV…ADEYDLWGTC (67 aa)) constitute a TRAM domain.

This sequence belongs to the methylthiotransferase family. RimO subfamily. [4Fe-4S] cluster is required as a cofactor.

Its subcellular location is the cytoplasm. The enzyme catalyses L-aspartate(89)-[ribosomal protein uS12]-hydrogen + (sulfur carrier)-SH + AH2 + 2 S-adenosyl-L-methionine = 3-methylsulfanyl-L-aspartate(89)-[ribosomal protein uS12]-hydrogen + (sulfur carrier)-H + 5'-deoxyadenosine + L-methionine + A + S-adenosyl-L-homocysteine + 2 H(+). Catalyzes the methylthiolation of an aspartic acid residue of ribosomal protein uS12. This is Ribosomal protein uS12 methylthiotransferase RimO from Actinobacillus succinogenes (strain ATCC 55618 / DSM 22257 / CCUG 43843 / 130Z).